Here is a 383-residue protein sequence, read N- to C-terminus: Pheromone-regulated membrane protein 10 (383 aa).

Topologically, residues methionine 1–proline 65 are cytoplasmic. A helical transmembrane segment spans residues tryptophan 66–glycine 86. Position 87 (aspartate 87) is a topological domain, extracellular. A helical transmembrane segment spans residues tryptophan 88–leucine 108. Topologically, residues serine 109 to asparagine 117 are cytoplasmic. A helical transmembrane segment spans residues valine 118 to proline 138. Residues arginine 139–histidine 141 lie on the Extracellular side of the membrane. A helical transmembrane segment spans residues isoleucine 142 to leucine 162. At cysteine 163 to methionine 180 the chain is on the cytoplasmic side. The helical transmembrane segment at phenylalanine 181–phenylalanine 201 threads the bilayer. Residues glycine 202–glutamine 216 are Extracellular-facing. A helical membrane pass occupies residues leucine 217 to leucine 237. The Cytoplasmic portion of the chain corresponds to asparagine 238 to histidine 241. Residues isoleucine 242–alanine 262 traverse the membrane as a helical segment. Topologically, residues glycine 263–glutamate 271 are extracellular. Residues phenylalanine 272–tryptophan 292 form a helical membrane-spanning segment. Position 293 (lysine 293) is a topological domain, cytoplasmic. A helical membrane pass occupies residues glycine 294 to serine 314. Residues glutamine 315–methionine 352 lie on the Extracellular side of the membrane. The helical transmembrane segment at isoleucine 353 to phenylalanine 373 threads the bilayer. At glycine 374–leucine 383 the chain is on the cytoplasmic side.

The protein belongs to the ThrE exporter (TC 2.A.79) family.

The protein resides in the membrane. This chain is Pheromone-regulated membrane protein 10 (PRM10), found in Saccharomyces cerevisiae (strain ATCC 204508 / S288c) (Baker's yeast).